Here is a 381-residue protein sequence, read N- to C-terminus: GDP-mannose-dependent alpha-(1-6)-phosphatidylinositol dimannoside mannosyltransferase (381 aa).

Residues G16, R207, 211 to 212, 283 to 287, and E291 contribute to the substrate site; these read EK and ETFGL.

Belongs to the glycosyltransferase group 1 family. Glycosyltransferase 4 subfamily.

Its pathway is phospholipid metabolism; phosphatidylinositol metabolism. Functionally, catalyzes the addition of a mannose residue from GDP-D-mannose to the position 6 of the alpha-1,6-linked mannose residue of the triacyl phosphatidylinositol dimannoside (Ac3PIM2) to generate triacyl phosphatidylinositol trimannoside (Ac3PIM3). This is GDP-mannose-dependent alpha-(1-6)-phosphatidylinositol dimannoside mannosyltransferase (pimC) from Mycobacterium tuberculosis (strain ATCC 25177 / H37Ra).